Reading from the N-terminus, the 424-residue chain is Hemagglutinin-esterase (424 aa).

An N-terminal signal peptide occupies residues 1-16; sequence MFLLPRFCLVCSIIST. Residues 7–127 are esterase domain 1; it reads FCLVCSIIST…NNDIWMQNKG (121 aa). Over 17–392 the chain is Virion surface; sequence FGFQNPPTNV…PICVYDPLPI (376 aa). S40 acts as the Nucleophile in catalysis. The cysteines at positions 44 and 65 are disulfide-linked. 5 N-linked (GlcNAc...) asparagine; by host glycosylation sites follow: N54, N89, N153, N236, and N301. Disulfide bonds link C113/C162, C197/C276, and C205/C249. Residues 128–266 are receptor binding; it reads LFYTQVYKKM…GNYLAISNEL (139 aa). Residues 267–379 are esterase domain 2; that stretch reads LLTVPTKAIC…NCPTAASIIS (113 aa). C307 and C312 are oxidised to a cystine. N316 carries N-linked (GlcNAc...) asparagine; by host glycosylation. Catalysis depends on charge relay system residues D326 and H329. C347 and C371 are disulfide-bonded. An N-linked (GlcNAc...) asparagine; by host glycan is attached at N358. A helical membrane pass occupies residues 393 to 413; sequence ILLGILLGVAVIVIVVLLLYF. The Intravirion portion of the chain corresponds to 414-424; sequence MVDNGIRQHYA.

The protein belongs to the influenza type C/coronaviruses hemagglutinin-esterase family. Homodimer; disulfide-linked. Forms a complex with the M protein in the pre-Golgi. Associates then with S-M complex to form a ternary complex S-M-HE. Post-translationally, N-glycosylated in the host RER.

It is found in the virion membrane. The protein resides in the host cell membrane. The enzyme catalyses N-acetyl-9-O-acetylneuraminate + H2O = N-acetylneuraminate + acetate + H(+). It carries out the reaction N-acetyl-4-O-acetylneuraminate + H2O = N-acetylneuraminate + acetate + H(+). In terms of biological role, structural protein that makes short spikes at the surface of the virus. Contains receptor binding and receptor-destroying activities. Mediates de-O-acetylation of N-acetyl-4-O-acetylneuraminic acid, which is probably the receptor determinant recognized by the virus on the surface of erythrocytes and susceptible cells. This receptor-destroying activity is important for virus release as it probably helps preventing self-aggregation and ensures the efficient spread of the progeny virus from cell to cell. May serve as a secondary viral attachment protein for initiating infection, the spike protein being the major one. May become a target for both the humoral and the cellular branches of the immune system. The polypeptide is Hemagglutinin-esterase (Sus scrofa (Pig)).